Consider the following 30-residue polypeptide: Urease subunit alpha (30 aa).

This sequence belongs to the metallo-dependent hydrolases superfamily. Urease alpha subunit family. Heterotrimer of UreA (gamma), UreB (beta) and UreC (alpha) subunits. Three heterotrimers associate to form the active enzyme. It depends on Ni cation as a cofactor.

It localises to the cytoplasm. It carries out the reaction urea + 2 H2O + H(+) = hydrogencarbonate + 2 NH4(+). The protein operates within nitrogen metabolism; urea degradation; CO(2) and NH(3) from urea (urease route): step 1/1. The protein is Urease subunit alpha (ureC) of Escherichia coli.